Consider the following 575-residue polypeptide: Probable cytochrome P450 514A1 (575 aa).

The helical transmembrane segment at 4–24 (IFTIILTITILVLSLILKDLL) threads the bilayer. Cys448 serves as a coordination point for heme.

This sequence belongs to the cytochrome P450 family. It depends on heme as a cofactor.

Its subcellular location is the membrane. The sequence is that of Probable cytochrome P450 514A1 (cyp514A1) from Dictyostelium discoideum (Social amoeba).